A 473-amino-acid chain; its full sequence is Digalactosyldiacylglycerol synthase 2, chloroplastic (473 aa).

Interaction with the membrane lipid bilayer regions lie at residues 130 to 148 (LTWF…YVIG) and 227 to 245 (QPFT…SKGY).

This sequence belongs to the glycosyltransferase group 1 family. Glycosyltransferase 4 subfamily. As to expression, expressed in leaves, flowers and roots, but not in stems and siliques.

Its subcellular location is the plastid. It is found in the chloroplast outer membrane. The enzyme catalyses a 1,2-diacyl-3-O-(beta-D-galactosyl)-sn-glycerol + UDP-alpha-D-galactose = a 1,2-diacyl-3-O-[alpha-D-galactosyl-(1-&gt;6)-beta-D-galactosyl]-sn-glycerol + UDP + H(+). Its activity is regulated as follows. Stimulated by anionic phospholipids. Functionally, involved in the synthesis of diacylglycerol galactolipids that are specifically found in thylakoid membranes. Specific for alpha-glycosidic linkages. During phosphate shortage, involved in the biosynthesis of digalactosyldiacylglycerol (DGDG) which rescues the limitation of phospholipids. This chain is Digalactosyldiacylglycerol synthase 2, chloroplastic, found in Arabidopsis thaliana (Mouse-ear cress).